Here is a 90-residue protein sequence, read N- to C-terminus: Small ribosomal subunit protein bS20 (90 aa).

The segment at M1–R25 is disordered.

This sequence belongs to the bacterial ribosomal protein bS20 family.

Its function is as follows. Binds directly to 16S ribosomal RNA. In Burkholderia multivorans (strain ATCC 17616 / 249), this protein is Small ribosomal subunit protein bS20.